We begin with the raw amino-acid sequence, 182 residues long: Adenine phosphoribosyltransferase (182 aa).

The protein belongs to the purine/pyrimidine phosphoribosyltransferase family. As to quaternary structure, homodimer.

It localises to the cytoplasm. The catalysed reaction is AMP + diphosphate = 5-phospho-alpha-D-ribose 1-diphosphate + adenine. Its pathway is purine metabolism; AMP biosynthesis via salvage pathway; AMP from adenine: step 1/1. Its function is as follows. Catalyzes a salvage reaction resulting in the formation of AMP, that is energically less costly than de novo synthesis. In Campylobacter jejuni subsp. jejuni serotype O:2 (strain ATCC 700819 / NCTC 11168), this protein is Adenine phosphoribosyltransferase.